Here is a 299-residue protein sequence, read N- to C-terminus: Zinc-alpha-2-glycoprotein (299 aa).

An N-terminal signal peptide occupies residues Met-1 to Ser-17. Residues Asn-24, Asn-125, and Asn-256 are each glycosylated (N-linked (GlcNAc...) asparagine). Cystine bridges form between Cys-120-Cys-183 and Cys-222-Cys-277. In terms of domain architecture, Ig-like C1-type spans Pro-204–Thr-289.

This sequence belongs to the MHC class I family. In terms of assembly, interacts with PIP.

It localises to the secreted. Functionally, stimulates lipid degradation in adipocytes and causes the extensive fat losses associated with some advanced cancers. The polypeptide is Zinc-alpha-2-glycoprotein (AZGP1) (Bos taurus (Bovine)).